We begin with the raw amino-acid sequence, 144 residues long: Large ribosomal subunit protein uL11 (144 aa).

Belongs to the universal ribosomal protein uL11 family. In terms of assembly, part of the ribosomal stalk of the 50S ribosomal subunit. Interacts with L10 and the large rRNA to form the base of the stalk. L10 forms an elongated spine to which L12 dimers bind in a sequential fashion forming a multimeric L10(L12)X complex. Post-translationally, one or more lysine residues are methylated.

Functionally, forms part of the ribosomal stalk which helps the ribosome interact with GTP-bound translation factors. This Polaromonas sp. (strain JS666 / ATCC BAA-500) protein is Large ribosomal subunit protein uL11.